The primary structure comprises 171 residues: MPLLDSFTVDHTRMEAPAVRVAKTMNTPHGDAITVFDLRFCVPNKEVMPERGSHTLEHLFAGFMRNHLNGNGVEIIDISPMGCRTGFYMSLIGTPDEQRVADAWKAAMEDVLKVQDQNQIPELNVYQCGTYQMHSLQEAQDIARSILERDVRINSNEELALPKEKLQELHI.

The Fe cation site is built by His54, His58, and Cys128.

The protein belongs to the LuxS family. Homodimer. It depends on Fe cation as a cofactor.

It catalyses the reaction S-(5-deoxy-D-ribos-5-yl)-L-homocysteine = (S)-4,5-dihydroxypentane-2,3-dione + L-homocysteine. In terms of biological role, involved in the synthesis of autoinducer 2 (AI-2) which is secreted by bacteria and is used to communicate both the cell density and the metabolic potential of the environment. The regulation of gene expression in response to changes in cell density is called quorum sensing. Catalyzes the transformation of S-ribosylhomocysteine (RHC) to homocysteine (HC) and 4,5-dihydroxy-2,3-pentadione (DPD). This Shigella boydii serotype 4 (strain Sb227) protein is S-ribosylhomocysteine lyase.